The primary structure comprises 78 residues: Conotoxin ArMKLT2-0313 (78 aa).

An N-terminal signal peptide occupies residues 1-22; the sequence is MKLTCVLIIAVLCLTVCQLITA. Positions 23 to 47 are excised as a propeptide; it reads DYLRDKQKYRSVRLRDGMLNFKGSR. Residue Gln48 is modified to Pyrrolidone carboxylic acid. Cystine bridges form between Cys49/Cys62, Cys56/Cys67, and Cys61/Cys75.

Belongs to the conotoxin O1 superfamily. In terms of tissue distribution, expressed by the venom duct.

It is found in the secreted. The polypeptide is Conotoxin ArMKLT2-0313 (Conus arenatus (Sand-dusted cone)).